A 129-amino-acid polypeptide reads, in one-letter code: Follitropin subunit beta (129 aa).

The first 18 residues, 1–18 (MKSVQFCFLFCCWKAICC), serve as a signal peptide directing secretion. Cystine bridges form between Cys21–Cys69, Cys35–Cys84, Cys38–Cys122, Cys46–Cys100, Cys50–Cys102, and Cys105–Cys112. Residues Asn25 and Asn42 are each glycosylated (N-linked (GlcNAc...) asparagine).

Belongs to the glycoprotein hormones subunit beta family. Heterodimer. The active follitropin is a heterodimer composed of an alpha chain/CGA shared with other hormones and a unique beta chain/FSHB shown here.

The protein resides in the secreted. In terms of biological role, together with the alpha chain CGA constitutes follitropin, the follicle-stimulating hormone, and provides its biological specificity to the hormone heterodimer. Binds FSHR, a G protein-coupled receptor, on target cells to activate downstream signaling pathways. Follitropin is involved in follicle development and spermatogenesis in reproductive organs. The protein is Follitropin subunit beta (FSHB) of Oryctolagus cuniculus (Rabbit).